The following is a 410-amino-acid chain: ATP phosphoribosyltransferase regulatory subunit (410 aa).

It belongs to the class-II aminoacyl-tRNA synthetase family. HisZ subfamily. Heteromultimer composed of HisG and HisZ subunits.

The protein localises to the cytoplasm. Its pathway is amino-acid biosynthesis; L-histidine biosynthesis; L-histidine from 5-phospho-alpha-D-ribose 1-diphosphate: step 1/9. Its function is as follows. Required for the first step of histidine biosynthesis. May allow the feedback regulation of ATP phosphoribosyltransferase activity by histidine. The chain is ATP phosphoribosyltransferase regulatory subunit from Synechococcus sp. (strain JA-3-3Ab) (Cyanobacteria bacterium Yellowstone A-Prime).